The primary structure comprises 208 residues: Large ribosomal subunit protein uL4 (208 aa).

The tract at residues 49 to 78 is disordered; the sequence is KAKGISDISGTTAKPYRQKHTGRARQGSLR.

It belongs to the universal ribosomal protein uL4 family. As to quaternary structure, part of the 50S ribosomal subunit.

In terms of biological role, one of the primary rRNA binding proteins, this protein initially binds near the 5'-end of the 23S rRNA. It is important during the early stages of 50S assembly. It makes multiple contacts with different domains of the 23S rRNA in the assembled 50S subunit and ribosome. Its function is as follows. Forms part of the polypeptide exit tunnel. The chain is Large ribosomal subunit protein uL4 from Anaplasma phagocytophilum (strain HZ).